Here is a 113-residue protein sequence, read N- to C-terminus: Urease subunit beta (113 aa).

The protein belongs to the urease beta subunit family. Heterotrimer of UreA (gamma), UreB (beta) and UreC (alpha) subunits. Three heterotrimers associate to form the active enzyme.

The protein resides in the cytoplasm. It carries out the reaction urea + 2 H2O + H(+) = hydrogencarbonate + 2 NH4(+). It functions in the pathway nitrogen metabolism; urea degradation; CO(2) and NH(3) from urea (urease route): step 1/1. The protein is Urease subunit beta of Cyanothece sp. (strain PCC 7425 / ATCC 29141).